Consider the following 403-residue polypeptide: MEILDGKIELPKGFVASGVFAGIKRSKKDLALIYSERLANISAVFTTNRVKAAPVILDMERAKKGKAQAIVINSGNANACTGEKGIEDAKSMAKKVAEVLEIEEEDVLVCSTGVIGVPLPMEKVLKGIEVAALSLSKEGGYDAAHAIMTTDTFLKAVTVKFNVEGKDITMTGFAKGSGMIHPNMATMLSFVLTDASVEKATLDKAFKNTVNRTYNMISVDGDMSTNDTAIVMANGMAENKAIQEGTYEFDLFYKALEYVNKTLARLIAKDGEGATKLIEVNVINAKTENDARLAAKAIVNSNLVKTAIFGEDANWGRILAAVGYSGADFDVDKVDIYLKSAKGEVKVCENGSFFAFDESLAKEVLKEKEIFIIVDMKAGEFMATSWGCDLSYDYVKINGSYRT.

The substrate site is built by threonine 149, lysine 175, threonine 186, glutamate 272, asparagine 398, and threonine 403. The Nucleophile role is filled by threonine 186.

Belongs to the ArgJ family. In terms of assembly, heterotetramer of two alpha and two beta chains.

It localises to the cytoplasm. The catalysed reaction is N(2)-acetyl-L-ornithine + L-glutamate = N-acetyl-L-glutamate + L-ornithine. The enzyme catalyses L-glutamate + acetyl-CoA = N-acetyl-L-glutamate + CoA + H(+). Its pathway is amino-acid biosynthesis; L-arginine biosynthesis; L-ornithine and N-acetyl-L-glutamate from L-glutamate and N(2)-acetyl-L-ornithine (cyclic): step 1/1. The protein operates within amino-acid biosynthesis; L-arginine biosynthesis; N(2)-acetyl-L-ornithine from L-glutamate: step 1/4. Catalyzes two activities which are involved in the cyclic version of arginine biosynthesis: the synthesis of N-acetylglutamate from glutamate and acetyl-CoA as the acetyl donor, and of ornithine by transacetylation between N(2)-acetylornithine and glutamate. The polypeptide is Arginine biosynthesis bifunctional protein ArgJ (Caldanaerobacter subterraneus subsp. tengcongensis (strain DSM 15242 / JCM 11007 / NBRC 100824 / MB4) (Thermoanaerobacter tengcongensis)).